Here is a 1475-residue protein sequence, read N- to C-terminus: ABC transporter G family member 15 (1475 aa).

Residues 1 to 10 are compositionally biased toward basic and acidic residues; the sequence is MDSNENKKNG. Disordered stretches follow at residues 1 to 40 and 75 to 94; these read MDSN…EEHI and NIKN…GGGA. The span at 17–34 shows a compositional bias: low complexity; the sequence is NIINNNNDNNNNNDNNNN. Residues 25 to 67 adopt a coiled-coil conformation; that stretch reads NNNNNDNNNNSTEEHIESVEQSIKEFNNVANELETEFRDYLVE. An ABC transporter 1 domain is found at 155–404; the sequence is LNVKNWFKKS…FIDMGFECEP (250 aa). Positions 507-753 constitute an ABC transmembrane type-2 1 domain; that stretch reads WGDKFSLISR…FTGERYLEKS (247 aa). 5 helical membrane passes run 596-616, 623-641, 653-673, 680-699, and 770-790; these read IPII…MFGL, FFIN…NNLY, IGQN…SYII, VWFG…RALM, and ICIV…VLNI. In terms of domain architecture, ABC transporter 2 spans 842–1087; the sequence is FTWQHMYYSV…LTSYFQRHGV (246 aa). 879 to 886 lines the ATP pocket; sequence GSSGAGKT. 6 consecutive transmembrane segments (helical) span residues 1180 to 1200, 1216 to 1236, 1256 to 1276, 1293 to 1313, 1323 to 1343, and 1449 to 1469; these read GYSY…GWTF, FIFN…PQFI, FALS…TIFF, FFFW…GQAI, ALNL…VLVI, and FGII…FVFL. Positions 1180–1404 constitute an ABC transmembrane type-2 2 domain; sequence GYSYGTFIQS…TCSDYAFEFL (225 aa).

This sequence belongs to the ABC transporter superfamily. ABCG family. PDR (TC 3.A.1.205) subfamily.

It localises to the membrane. This Dictyostelium discoideum (Social amoeba) protein is ABC transporter G family member 15 (abcG15).